Reading from the N-terminus, the 24-residue chain is Xenoposin-precursor fragment B1 (24 aa).

As to expression, expressed by the skin glands.

It localises to the secreted. Functionally, has antibacterial activity. The polypeptide is Xenoposin-precursor fragment B1 (Xenopus borealis (Kenyan clawed frog)).